Reading from the N-terminus, the 146-residue chain is MAENTNEITTSEWEVMRIVWSLGQVNSRDLIDLLQPKRDWQDSTIKTLIGRLVKKGFLKTEKEGRRFNYTATVPEIEAMENATQSLFEHLCGMKKGQTLAALIDQTTLSQTDILQLQQLLTAKAATAPEKVACDCLPNKCDCEKEE.

It belongs to the BlaI transcriptional regulatory family.

This is an uncharacterized protein from Latilactobacillus sakei (Lactobacillus sakei).